The following is a 404-amino-acid chain: Homoserine O-succinyltransferase (404 aa).

Residues 1–25 (MTDIQADPAVTAADAAQADTSSPTA) are compositionally biased toward low complexity. Residues 1-30 (MTDIQADPAVTAADAAQADTSSPTAHQGKP) are disordered. The AB hydrolase-1 domain maps to 75–384 (NAVLICHALN…HGHDAFLLED (310 aa)). The active-site Nucleophile is Ser-179. Arg-249 is a substrate binding site. Catalysis depends on residues Asp-344 and His-377. Asp-378 is a binding site for substrate.

Belongs to the AB hydrolase superfamily. MetX family. Homodimer.

The protein localises to the cytoplasm. The enzyme catalyses L-homoserine + succinyl-CoA = O-succinyl-L-homoserine + CoA. It functions in the pathway amino-acid biosynthesis; L-methionine biosynthesis via de novo pathway; O-succinyl-L-homoserine from L-homoserine: step 1/1. Functionally, transfers a succinyl group from succinyl-CoA to L-homoserine, forming succinyl-L-homoserine. This is Homoserine O-succinyltransferase from Ralstonia pickettii (strain 12J).